Reading from the N-terminus, the 377-residue chain is Lipoyl synthase, mitochondrial (377 aa).

Residues 1-77 (MFRRGGRILN…LPNGSVHKRL (77 aa)) constitute a mitochondrion transit peptide. Residues cysteine 107, cysteine 112, cysteine 118, cysteine 138, cysteine 142, cysteine 145, and serine 353 each coordinate [4Fe-4S] cluster. A Radical SAM core domain is found at 123 to 342 (DKTRATATIM…RKRAEELGFL (220 aa)).

Belongs to the radical SAM superfamily. Lipoyl synthase family. The cofactor is [4Fe-4S] cluster.

The protein resides in the mitochondrion. It carries out the reaction [[Fe-S] cluster scaffold protein carrying a second [4Fe-4S](2+) cluster] + N(6)-octanoyl-L-lysyl-[protein] + 2 oxidized [2Fe-2S]-[ferredoxin] + 2 S-adenosyl-L-methionine + 4 H(+) = [[Fe-S] cluster scaffold protein] + N(6)-[(R)-dihydrolipoyl]-L-lysyl-[protein] + 4 Fe(3+) + 2 hydrogen sulfide + 2 5'-deoxyadenosine + 2 L-methionine + 2 reduced [2Fe-2S]-[ferredoxin]. Its pathway is protein modification; protein lipoylation via endogenous pathway; protein N(6)-(lipoyl)lysine from octanoyl-[acyl-carrier-protein]: step 2/2. In terms of biological role, catalyzes the radical-mediated insertion of two sulfur atoms into the C-6 and C-8 positions of the octanoyl moiety bound to the lipoyl domains of lipoate-dependent enzymes, thereby converting the octanoylated domains into lipoylated derivatives. This chain is Lipoyl synthase, mitochondrial, found in Schizosaccharomyces japonicus (strain yFS275 / FY16936) (Fission yeast).